We begin with the raw amino-acid sequence, 373 residues long: 3 beta-hydroxysteroid dehydrogenase/Delta 5--&gt;4-isomerase type 2 (373 aa).

Tyrosine 155 (proton acceptor) is an active-site residue. Residue lysine 159 participates in NAD(+) binding. The chain crosses the membrane as a helical span at residues 288–308 (LPLLYWLAFLLETVSFLLRPF).

Belongs to the 3-beta-HSD family. As to expression, adrenal glands, testes and ovaries.

It is found in the endoplasmic reticulum membrane. The protein resides in the mitochondrion membrane. It catalyses the reaction a 3beta-hydroxy-Delta(5)-steroid + NAD(+) = a 3-oxo-Delta(5)-steroid + NADH + H(+). The catalysed reaction is a 3-oxo-Delta(5)-steroid = a 3-oxo-Delta(4)-steroid. It participates in lipid metabolism; steroid biosynthesis. In terms of biological role, 3-beta-HSD is a bifunctional enzyme, that catalyzes the oxidative conversion of Delta(5)-ene-3-beta-hydroxy steroid, and the oxidative conversion of ketosteroids. The 3-beta-HSD enzymatic system plays a crucial role in the biosynthesis of all classes of hormonal steroids. The protein is 3 beta-hydroxysteroid dehydrogenase/Delta 5--&gt;4-isomerase type 2 (Hsd3b) of Rattus norvegicus (Rat).